The following is a 103-amino-acid chain: Small ribosomal subunit protein uS10 (103 aa).

It belongs to the universal ribosomal protein uS10 family. In terms of assembly, part of the 30S ribosomal subunit.

Its function is as follows. Involved in the binding of tRNA to the ribosomes. The chain is Small ribosomal subunit protein uS10 from Clostridioides difficile (strain 630) (Peptoclostridium difficile).